The chain runs to 426 residues: Serine--tRNA ligase (426 aa).

230–232 (TAE) contacts L-serine. 261–263 (RSE) serves as a coordination point for ATP. Glutamate 284 lines the L-serine pocket. Residue 348–351 (EISS) participates in ATP binding. Serine 384 contacts L-serine.

It belongs to the class-II aminoacyl-tRNA synthetase family. Type-1 seryl-tRNA synthetase subfamily. As to quaternary structure, homodimer. The tRNA molecule binds across the dimer.

The protein localises to the cytoplasm. It carries out the reaction tRNA(Ser) + L-serine + ATP = L-seryl-tRNA(Ser) + AMP + diphosphate + H(+). It catalyses the reaction tRNA(Sec) + L-serine + ATP = L-seryl-tRNA(Sec) + AMP + diphosphate + H(+). It participates in aminoacyl-tRNA biosynthesis; selenocysteinyl-tRNA(Sec) biosynthesis; L-seryl-tRNA(Sec) from L-serine and tRNA(Sec): step 1/1. Catalyzes the attachment of serine to tRNA(Ser). Is also able to aminoacylate tRNA(Sec) with serine, to form the misacylated tRNA L-seryl-tRNA(Sec), which will be further converted into selenocysteinyl-tRNA(Sec). This is Serine--tRNA ligase from Novosphingobium aromaticivorans (strain ATCC 700278 / DSM 12444 / CCUG 56034 / CIP 105152 / NBRC 16084 / F199).